The chain runs to 97 residues: MKIKDVERYTIPLDVPYGGEALPDGKAPTGTTVEELIKALKKLPPKGLVSHDFGGNSRIIVTHYKPDIDPDCPFEAAMQQAIKEMASATWIPPQYFQ.

The protein is Gene 45 protein (45) of Mycobacterium (Mycobacteriophage L5).